The chain runs to 537 residues: 5,6-dihydroxyindole-2-carboxylic acid oxidase (537 aa).

An N-terminal signal peptide occupies residues 1 to 24 (MKSYNVLPLAYISLFLMLFYQVWA). Residues 25-477 (QFPRECANIE…WPGQEFTVSE (453 aa)) lie on the Lumenal, melanosome side of the membrane. 5 cysteine pairs are disulfide-bonded: Cys30–Cys41, Cys42–Cys65, Cys56–Cys99, Cys101–Cys110, and Cys113–Cys122. N-linked (GlcNAc...) asparagine glycosylation is found at Asn96 and Asn104. Asn181 carries N-linked (GlcNAc...) asparagine glycosylation. Zn(2+) is bound by residues His192, His215, and His224. 2 disulfide bridges follow: Cys258–Cys261 and Cys290–Cys303. N-linked (GlcNAc...) asparagine glycans are attached at residues Asn304 and Asn350. Residues His377 and His381 each contribute to the Zn(2+) site. Asn385 carries N-linked (GlcNAc...) asparagine glycosylation. His404 contacts Zn(2+). Residues 478-501 (IITIAVVAALLLVAAIFGVASCLI) form a helical membrane-spanning segment. Residues 502–537 (RSRSTKNEANQPLLTDHYQRYAEDYEELPNPNHSMV) are Cytoplasmic-facing.

It belongs to the tyrosinase family. Monomer. Interacts with ATP7A. Interacts with SLC45A2. It depends on Cu(2+) as a cofactor. The cofactor is Zn(2+). Post-translationally, glycosylated. Pigment cells.

It is found in the melanosome membrane. It carries out the reaction 2 5,6-dihydroxyindole-2-carboxylate + O2 = 2 indole-5,6-quinone-2-carboxylate + 2 H2O. The protein operates within pigment biosynthesis; melanin biosynthesis. Functionally, plays a role in melanin biosynthesis. Catalyzes the oxidation of 5,6-dihydroxyindole-2-carboxylic acid (DHICA) into indole-5,6-quinone-2-carboxylic acid. May regulate or influence the type of melanin synthesized. Also to a lower extent, capable of hydroxylating tyrosine and producing melanin. The sequence is that of 5,6-dihydroxyindole-2-carboxylic acid oxidase (Tyrp1) from Mus musculus (Mouse).